Consider the following 807-residue polypeptide: Glycerol-3-phosphate acyltransferase (807 aa).

Positions 306–311 match the HXXXXD motif motif; that stretch reads HRSHMD.

It belongs to the GPAT/DAPAT family.

The protein localises to the cell inner membrane. It carries out the reaction sn-glycerol 3-phosphate + an acyl-CoA = a 1-acyl-sn-glycero-3-phosphate + CoA. Its pathway is phospholipid metabolism; CDP-diacylglycerol biosynthesis; CDP-diacylglycerol from sn-glycerol 3-phosphate: step 1/3. This chain is Glycerol-3-phosphate acyltransferase (plsB), found in Escherichia coli O157:H7.